Reading from the N-terminus, the 382-residue chain is Kelch domain-containing protein 3 (382 aa).

Kelch repeat units lie at residues 25–77, 88–138, 139–189, 191–249, and 251–301; these read RVYS…PYMR, TVLL…VLGK, IMYI…TMLG, HMYV…GYNG, and LYIF…IVGD.

As to quaternary structure, component of a CRL2(KLHDC3) complex, also named ECS(KLHDC3) complex, composed of CUL2, Elongin BC (ELOB and ELOC), RBX1 and substrate-specific adapter KLHDC3. May form oligomers as a KLHDC3-ELOB-ELOC complex; this interaction is likely autoinhibitory for the E3 ligase complex.

The protein resides in the cytoplasm. It participates in protein modification; protein ubiquitination. In terms of biological role, substrate-recognition component of a Cul2-RING (CRL2) E3 ubiquitin-protein ligase complex of the DesCEND (destruction via C-end degrons) pathway, which recognizes a C-degron located at the extreme C terminus of target proteins, leading to their ubiquitination and degradation. The C-degron recognized by the DesCEND pathway is usually a motif of less than ten residues and can be present in full-length proteins, truncated proteins or proteolytically cleaved forms. The CRL2(KLHDC3) complex specifically recognizes proteins with a glycine (Gly) at the C-terminus, leading to their ubiquitination and degradation: recognizes the C-terminal -Arg-(Xaa)n-Arg-Gly, -Arg-(Xaa)n-Lys-Gly, and -Arg-(Xaa)n-Gln-Gly degrons. The CRL2(KLHDC3) complex mediates ubiquitination and degradation of truncated SELENOV and SEPHS2 selenoproteins produced by failed UGA/Sec decoding, which end with a glycine. May be involved in meiotic recombination process. The protein is Kelch domain-containing protein 3 of Homo sapiens (Human).